The following is a 368-amino-acid chain: 2-aminoethylphosphonate--pyruvate transaminase (368 aa).

K192 carries the N6-(pyridoxal phosphate)lysine modification.

The protein belongs to the class-V pyridoxal-phosphate-dependent aminotransferase family. PhnW subfamily. Homodimer. It depends on pyridoxal 5'-phosphate as a cofactor.

It catalyses the reaction (2-aminoethyl)phosphonate + pyruvate = phosphonoacetaldehyde + L-alanine. Its function is as follows. Involved in phosphonate degradation. This is 2-aminoethylphosphonate--pyruvate transaminase from Pseudomonas putida (strain ATCC 700007 / DSM 6899 / JCM 31910 / BCRC 17059 / LMG 24140 / F1).